The sequence spans 238 residues: MRPNERANNQPRPIKITRHYTKHAEGSVLVEFGDTKVLCTATVEESVPRFLKGQNQGWVTAEYGMLPRSTHSRMQREAAKGKQGGRTLEIQRLIARSLRAMVDLEALGERSITLDCDVIQADGGTRTASITGACVALCDAIHGLVENGTLKVNPIKSLVAAISVGIVEGVPVCDLEYVEDSAAETDMNVVMMEDGRMIEVQGTAEGEPFSHEELLTLLALAKEGCQLIFDVQRQALAK.

Phosphate-binding positions include R86 and 124–126 (GTR).

The protein belongs to the RNase PH family. Homohexameric ring arranged as a trimer of dimers.

The catalysed reaction is tRNA(n+1) + phosphate = tRNA(n) + a ribonucleoside 5'-diphosphate. In terms of biological role, phosphorolytic 3'-5' exoribonuclease that plays an important role in tRNA 3'-end maturation. Removes nucleotide residues following the 3'-CCA terminus of tRNAs; can also add nucleotides to the ends of RNA molecules by using nucleoside diphosphates as substrates, but this may not be physiologically important. Probably plays a role in initiation of 16S rRNA degradation (leading to ribosome degradation) during starvation. The chain is Ribonuclease PH from Pasteurella multocida (strain Pm70).